The sequence spans 264 residues: 3-methyl-2-oxobutanoate hydroxymethyltransferase (264 aa).

Residues Asp45 and Asp84 each contribute to the Mg(2+) site. Residues 45–46 (DS), Asp84, and Lys113 each bind 3-methyl-2-oxobutanoate. Residue Glu115 participates in Mg(2+) binding. Glu182 (proton acceptor) is an active-site residue.

It belongs to the PanB family. In terms of assembly, homodecamer; pentamer of dimers. It depends on Mg(2+) as a cofactor.

The protein resides in the cytoplasm. The enzyme catalyses 3-methyl-2-oxobutanoate + (6R)-5,10-methylene-5,6,7,8-tetrahydrofolate + H2O = 2-dehydropantoate + (6S)-5,6,7,8-tetrahydrofolate. It participates in cofactor biosynthesis; (R)-pantothenate biosynthesis; (R)-pantoate from 3-methyl-2-oxobutanoate: step 1/2. Its function is as follows. Catalyzes the reversible reaction in which hydroxymethyl group from 5,10-methylenetetrahydrofolate is transferred onto alpha-ketoisovalerate to form ketopantoate. This Nitrosococcus oceani (strain ATCC 19707 / BCRC 17464 / JCM 30415 / NCIMB 11848 / C-107) protein is 3-methyl-2-oxobutanoate hydroxymethyltransferase.